The primary structure comprises 112 residues: MYB-like transcription factor ETC2 (112 aa).

A Myb-like domain is found at 41–78 (TEQEEDLISRMYRLVGNRWDLIAGRVVGRKANEIERYW).

In terms of assembly, interacts with GL3. As to expression, expressed in stomatal guard mother cells, young stomata and trichomes of young leaves, and inflorescences.

It is found in the nucleus. Functionally, MYB-type transcription factor involved in epidermal cell fate specification. Acts as a negative regulator of trichome development, by mediating lateral inhibition. Promotes the formation of hair developing cells in H position in root epidermis, probably by inhibiting non-hair cell formation. In Arabidopsis thaliana (Mouse-ear cress), this protein is MYB-like transcription factor ETC2 (ETC2).